Here is a 309-residue protein sequence, read N- to C-terminus: uncharacterized protein (309 aa).

Disordered stretches follow at residues 1-94 (IGEV…RQQI) and 286-309 (HTRN…PPRG). Over residues 30 to 43 (PAQPPSPAPTPSRT) the composition is skewed to pro residues. The segment covering 58-67 (RSKTPDKRSA) has biased composition (basic and acidic residues). Positions 297–309 (KNTPPPLEDPPRG) are enriched in pro residues.

This is an uncharacterized protein from Homo sapiens (Human).